The sequence spans 35 residues: GVPGDVHDEQKQHDINFLLFKVYEVLXDIXLKXVA.

The protein belongs to the tyrosinase family. Hemocyanin subfamily. Hemolymph.

Its subcellular location is the secreted. The protein localises to the extracellular space. In terms of biological role, hemocyanins are copper-containing oxygen carriers occurring freely dissolved in the hemolymph of many mollusks and arthropods. The protein is Hemocyanin A chain of Cherax destructor (Common yabby crayfish).